We begin with the raw amino-acid sequence, 930 residues long: Type I restriction enzyme SsaAORF53P endonuclease subunit (930 aa).

The 165-residue stretch at 254–418 (HQATETSNNG…DGRSTADIFG (165 aa)) folds into the Helicase ATP-binding domain. 268 to 274 (TTGSGKT) is a binding site for ATP.

Belongs to the HsdR family. The type I restriction/modification system is composed of three polypeptides R, M and S.

The catalysed reaction is Endonucleolytic cleavage of DNA to give random double-stranded fragments with terminal 5'-phosphates, ATP is simultaneously hydrolyzed.. The restriction (R) subunit of a type I restriction enzyme that recognizes an undetermined sequence and cleaves a random distance away. Subunit R is required for both nuclease and ATPase activities, but not for modification. After locating a non-methylated recognition site, the enzyme complex serves as a molecular motor that translocates DNA in an ATP-dependent manner until a collision occurs that triggers cleavage. The polypeptide is Type I restriction enzyme SsaAORF53P endonuclease subunit (Staphylococcus saprophyticus subsp. saprophyticus (strain ATCC 15305 / DSM 20229 / NCIMB 8711 / NCTC 7292 / S-41)).